The following is a 67-amino-acid chain: LPS-assembly lipoprotein LptM (67 aa).

A signal peptide spans 1 to 19 (MKNVFKALTVLLTLFSLTG). Cys20 is lipidated: N-palmitoyl cysteine. Cys20 carries S-diacylglycerol cysteine lipidation. Residues 26–67 (LYFPPADKNAPPPTKPVETQTQSTVPDKNDRATGDGPSQVNY) are disordered. Residues 42–51 (VETQTQSTVP) show a composition bias toward polar residues.

It belongs to the LptM family. As to quaternary structure, interacts with the outer membrane embedded portion of the LPS translocon formed by LptD and LptE (LptDE).

Its subcellular location is the cell outer membrane. In terms of biological role, component of the lipopolysaccharide (LPS) transport (Lpt) pathway that promotes efficient assembly of the outer membrane LPS translocon (LptDE) by the BAM complex. Facilitates oxidative maturation of LptD by stabilizing a conformation of the LPS translocon in which LptD can efficiently acquire native disulfide bonds, thereby activating the LPS translocon. The chain is LPS-assembly lipoprotein LptM from Escherichia coli O157:H7.